Here is a 332-residue protein sequence, read N- to C-terminus: Autoinducer 2 import system permease protein LsrD (332 aa).

The next 10 helical transmembrane spans lie at 7-27, 45-65, 70-90, 91-111, 118-138, 162-182, 216-236, 240-260, 261-281, and 288-308; these read YSWEIALAALLIFEILAFGLI, ICIGIVALPLTMVIVSGGMDI, TIGLCAITLGVLFQLGMPLPL, AIIITLLLGAICGLINAGLII, LVITLGTMYLFGGSALLLSGM, FLGIPMPLIFFLVCCLFFWLL, VYAMTGCASAIAAVLLVSYFG, SDLGASFLMPTITAVVLGGAN, IYGGSGSIMGSALAALLVGFL, and AGVPNQISSALSGALLIVVVV.

The protein belongs to the binding-protein-dependent transport system permease family. AraH/RbsC subfamily. As to quaternary structure, the complex is composed of two ATP-binding proteins (LsrA), two transmembrane proteins (LsrC and LsrD) and a solute-binding protein (LsrB).

Its subcellular location is the cell inner membrane. In terms of biological role, part of the ABC transporter complex LsrABCD involved in autoinducer 2 (AI-2) import. Probably responsible for the translocation of the substrate across the membrane. The sequence is that of Autoinducer 2 import system permease protein LsrD (lsrD) from Salmonella typhi.